Here is a 247-residue protein sequence, read N- to C-terminus: Suppressor of silencing P0 (247 aa).

An F-box-like domain is found at 76–95; sequence LPRHLHYECLEWGLLCGTHP.

This sequence belongs to the polerovirus P0 protein family.

Functionally, suppressor of RNA-mediated gene silencing, also known as post-transcriptional gene silencing (PTGS), a mechanism of plant viral defense that limits the accumulation of viral RNAs. The P0 protein suppresses local PTGS using its F-box-like domain to mediate destabilization and degradation of the AGO1 protein, although not via an interaction with host SKP1A. Participates, together with the proteins P1 and P7, in the inhibition of the induction of aphid-induced host phytohormones. This could play a role in the attraction to the infected plants by aphids. This is Suppressor of silencing P0 from Potato leafroll virus (strain Potato/Netherlands/Wageningen/1989) (PLrV).